Consider the following 320-residue polypeptide: Pyrroline-5-carboxylate reductase 2 (320 aa).

N-acetylserine is present on serine 2. NADP(+)-binding positions include 6-11 and serine 34; that span reads IGAGQL. Alanine 8, glutamine 10, leucine 11, serine 34, glutamate 36, asparagine 56, valine 70, lysine 71, and alanine 97 together coordinate NADPH. Residues asparagine 56, 69–72, and 95–97 contribute to the NADP(+) site; these read AVKP and CAA. Residue glutamate 164 participates in L-proline binding. Position 230 (asparagine 230) interacts with NADPH. L-proline is bound by residues alanine 237 and threonine 238. Over residues 295-305 the composition is skewed to low complexity; it reads PTVSTLTPSSP. The interval 295–320 is disordered; that stretch reads PTVSTLTPSSPGKLLTRSLALGGKKD. Serine 304 bears the Phosphoserine mark.

The protein belongs to the pyrroline-5-carboxylate reductase family. Homodecamer; composed of 5 homodimers. Interacts with LTO1.

The protein localises to the cytoplasm. It localises to the mitochondrion. The catalysed reaction is L-proline + NADP(+) = (S)-1-pyrroline-5-carboxylate + NADPH + 2 H(+). It carries out the reaction L-proline + NAD(+) = (S)-1-pyrroline-5-carboxylate + NADH + 2 H(+). Its pathway is amino-acid biosynthesis; L-proline biosynthesis; L-proline from L-glutamate 5-semialdehyde: step 1/1. Oxidoreductase that catalyzes the last step in proline biosynthesis, which corresponds to the reduction of pyrroline-5-carboxylate to L-proline using NAD(P)H. At physiologic concentrations, has higher specific activity in the presence of NADH. Involved in cellular response to oxidative stress. In some cell types, such as erythrocytes, its primary function may be the generation of NADP(+). This is Pyrroline-5-carboxylate reductase 2 (PYCR2) from Macaca fascicularis (Crab-eating macaque).